Consider the following 582-residue polypeptide: ATP-dependent lipid A-core flippase (582 aa).

5 helical membrane-spanning segments follow: residues 16 to 36 (LWPTIAPFKAGLIVAGVALIL), 63 to 83 (VLVWMPLVVIGLMILRGITSY), 153 to 173 (IIGLFIMMFYYSWQLSIILIV), 253 to 273 (PIIQLIASLALAFVLYAASFP), and 275 to 295 (VMDNLTAGTITVVFSSMIALM). The 283-residue stretch at 28–310 (IVAGVALILN…LTNVNAQFQR (283 aa)) folds into the ABC transmembrane type-1 domain. Positions 342–578 (VEFRNVTFTY…RGVYAQLHKM (237 aa)) constitute an ABC transporter domain. An ATP-binding site is contributed by 376 to 383 (GRSGSGKS).

Belongs to the ABC transporter superfamily. Lipid exporter (TC 3.A.1.106) family. In terms of assembly, homodimer.

The protein localises to the cell inner membrane. It catalyses the reaction ATP + H2O + lipid A-core oligosaccharideSide 1 = ADP + phosphate + lipid A-core oligosaccharideSide 2.. Functionally, involved in lipopolysaccharide (LPS) biosynthesis. Translocates lipid A-core from the inner to the outer leaflet of the inner membrane. Transmembrane domains (TMD) form a pore in the inner membrane and the ATP-binding domain (NBD) is responsible for energy generation. This chain is ATP-dependent lipid A-core flippase, found in Shigella sonnei (strain Ss046).